The following is a 246-amino-acid chain: MNPLISDFQTPQQRTPVIVALDFSNEKDTLGFVRNLDPTLCQIKIGKELFTATGRNLAESLINQGFKLFLDLKYHDIPHTVAQACKVAADMGVWMVDMHASGGRRMMEAAAEAVAGYGTKPLLIGVTVLTSMEQSDLAEIGLNTAPEEQVIRLAKLAQSSGLDGVVCSAQEAAPLRRELGQDFVLVTPGIRLDVAGNNDDQRRIMTPAEALAAGSTYLVMGRPVTQAADPVAVLREVNRVANLEAN.

Substrate contacts are provided by residues Asp-22, Lys-44, 71-80, Thr-130, Arg-191, Gln-201, Gly-221, and Arg-222; that span reads DLKYHDIPHT. Lys-73 serves as the catalytic Proton donor.

This sequence belongs to the OMP decarboxylase family. Type 1 subfamily. As to quaternary structure, homodimer.

The catalysed reaction is orotidine 5'-phosphate + H(+) = UMP + CO2. The protein operates within pyrimidine metabolism; UMP biosynthesis via de novo pathway; UMP from orotate: step 2/2. Catalyzes the decarboxylation of orotidine 5'-monophosphate (OMP) to uridine 5'-monophosphate (UMP). The polypeptide is Orotidine 5'-phosphate decarboxylase (Neisseria meningitidis serogroup B (strain ATCC BAA-335 / MC58)).